The primary structure comprises 206 residues: Large ribosomal subunit protein uL4 (206 aa).

A disordered region spans residues 63–85; that stretch reads MYKQKGTGSARHGSARAPQFRGG.

This sequence belongs to the universal ribosomal protein uL4 family. Part of the 50S ribosomal subunit.

Functionally, one of the primary rRNA binding proteins, this protein initially binds near the 5'-end of the 23S rRNA. It is important during the early stages of 50S assembly. It makes multiple contacts with different domains of the 23S rRNA in the assembled 50S subunit and ribosome. Forms part of the polypeptide exit tunnel. This chain is Large ribosomal subunit protein uL4, found in Beijerinckia indica subsp. indica (strain ATCC 9039 / DSM 1715 / NCIMB 8712).